The sequence spans 486 residues: ATP synthase subunit beta (486 aa).

Position 171–178 (171–178 (GGAGVGKT)) interacts with ATP.

The protein belongs to the ATPase alpha/beta chains family. As to quaternary structure, F-type ATPases have 2 components, CF(1) - the catalytic core - and CF(0) - the membrane proton channel. CF(1) has five subunits: alpha(3), beta(3), gamma(1), delta(1), epsilon(1). CF(0) has three main subunits: a(1), b(2) and c(9-12). The alpha and beta chains form an alternating ring which encloses part of the gamma chain. CF(1) is attached to CF(0) by a central stalk formed by the gamma and epsilon chains, while a peripheral stalk is formed by the delta and b chains.

The protein resides in the cell membrane. The enzyme catalyses ATP + H2O + 4 H(+)(in) = ADP + phosphate + 5 H(+)(out). Produces ATP from ADP in the presence of a proton gradient across the membrane. The catalytic sites are hosted primarily by the beta subunits. The protein is ATP synthase subunit beta of Salinispora tropica (strain ATCC BAA-916 / DSM 44818 / JCM 13857 / NBRC 105044 / CNB-440).